Reading from the N-terminus, the 497-residue chain is MNLRSLLASTPTQVLQPQHAALDLAITGLQTDSRRCQPGDLFLGMPGTQVDGGQFWPEAIAAGAVAVIVTPTALAQRPLSANPEACLILSDQMPVTAGAIAAAFYNQPAQTLKLIGVTGTNGKTTTTHLVEHFLNAADTKTALLGTLYNRWPGYSEVAQHTTPFATDLQAQLATAVDAGCQAAVMEVSSHALDQGRVNGCGFDVAVFTNLTQDHLDYHGTMEAYFAAKARLFAPPYLRGKAVINADDAYGQRLITMTPPGQCLTYSVVGTADFCTTDLQYGPTGVEGTIKTPDGAFPFRSPLVGQFNLANLLGAIAAGWTLGLPIETMLAVVPDFVGVPGRMERVVGQDSDPTVIVDYAHTPDSLENLLKAARPFIQGELICVFGCGGDRDRTKRPLMGEIAARLADRVIITSDNPRTEDPRQILADIVAGIPAASPVVVEADRAAAIRQAILSAQPGDGVLLAGKGHEDYQILGTTKIHFDDREQARLALAERQSA.

S33 provides a ligand contact to UDP-N-acetyl-alpha-D-muramoyl-L-alanyl-D-glutamate. G119–T125 serves as a coordination point for ATP. Residues T161 to T162, S188, Q194, and R196 each bind UDP-N-acetyl-alpha-D-muramoyl-L-alanyl-D-glutamate. K228 is modified (N6-carboxylysine). Residues R390, D414 to R417, G465, and E469 each bind meso-2,6-diaminopimelate. The Meso-diaminopimelate recognition motif signature appears at D414 to R417.

This sequence belongs to the MurCDEF family. MurE subfamily. The cofactor is Mg(2+). Carboxylation is probably crucial for Mg(2+) binding and, consequently, for the gamma-phosphate positioning of ATP.

Its subcellular location is the cytoplasm. It catalyses the reaction UDP-N-acetyl-alpha-D-muramoyl-L-alanyl-D-glutamate + meso-2,6-diaminopimelate + ATP = UDP-N-acetyl-alpha-D-muramoyl-L-alanyl-gamma-D-glutamyl-meso-2,6-diaminopimelate + ADP + phosphate + H(+). The protein operates within cell wall biogenesis; peptidoglycan biosynthesis. Its function is as follows. Catalyzes the addition of meso-diaminopimelic acid to the nucleotide precursor UDP-N-acetylmuramoyl-L-alanyl-D-glutamate (UMAG) in the biosynthesis of bacterial cell-wall peptidoglycan. This Synechococcus elongatus (strain ATCC 33912 / PCC 7942 / FACHB-805) (Anacystis nidulans R2) protein is UDP-N-acetylmuramoyl-L-alanyl-D-glutamate--2,6-diaminopimelate ligase.